The primary structure comprises 31 residues: MEALVYTFLLVGTLGIIFFAIFFREPPRIIK.

The chain crosses the membrane as a helical span at residues 3–23 (ALVYTFLLVGTLGIIFFAIFF).

This sequence belongs to the PsbT family. As to quaternary structure, PSII is composed of 1 copy each of membrane proteins PsbA, PsbB, PsbC, PsbD, PsbE, PsbF, PsbH, PsbI, PsbJ, PsbK, PsbL, PsbM, PsbT, PsbY, PsbZ, Psb30/Ycf12, at least 3 peripheral proteins of the oxygen-evolving complex and a large number of cofactors. It forms dimeric complexes.

The protein localises to the plastid. It localises to the chloroplast thylakoid membrane. In terms of biological role, found at the monomer-monomer interface of the photosystem II (PS II) dimer, plays a role in assembly and dimerization of PSII. PSII is a light-driven water plastoquinone oxidoreductase, using light energy to abstract electrons from H(2)O, generating a proton gradient subsequently used for ATP formation. In Mesostigma viride (Green alga), this protein is Photosystem II reaction center protein T.